Here is an 824-residue protein sequence, read N- to C-terminus: Leucine--tRNA ligase (824 aa).

The 'HIGH' region motif lies at 42–52; that stretch reads PYPSGRIHMGH. Positions 581 to 585 match the 'KMSKS' region motif; it reads KMSKS. Residue K584 coordinates ATP.

It belongs to the class-I aminoacyl-tRNA synthetase family.

The protein resides in the cytoplasm. It carries out the reaction tRNA(Leu) + L-leucine + ATP = L-leucyl-tRNA(Leu) + AMP + diphosphate. This chain is Leucine--tRNA ligase, found in Geotalea daltonii (strain DSM 22248 / JCM 15807 / FRC-32) (Geobacter daltonii).